The sequence spans 273 residues: Dermonecrotic toxin LdSicTox-alphaIB3avi (273 aa).

His5 is an active-site residue. Mg(2+)-binding residues include Glu25 and Asp27. His41 acts as the Nucleophile in catalysis. Disulfide bonds link Cys45–Cys51 and Cys47–Cys190. Residue Asp85 coordinates Mg(2+).

This sequence belongs to the arthropod phospholipase D family. Class II subfamily. Mg(2+) is required as a cofactor. As to expression, expressed by the venom gland.

It is found in the secreted. It carries out the reaction an N-(acyl)-sphingosylphosphocholine = an N-(acyl)-sphingosyl-1,3-cyclic phosphate + choline. It catalyses the reaction an N-(acyl)-sphingosylphosphoethanolamine = an N-(acyl)-sphingosyl-1,3-cyclic phosphate + ethanolamine. The enzyme catalyses a 1-acyl-sn-glycero-3-phosphocholine = a 1-acyl-sn-glycero-2,3-cyclic phosphate + choline. The catalysed reaction is a 1-acyl-sn-glycero-3-phosphoethanolamine = a 1-acyl-sn-glycero-2,3-cyclic phosphate + ethanolamine. Dermonecrotic toxins cleave the phosphodiester linkage between the phosphate and headgroup of certain phospholipids (sphingolipid and lysolipid substrates), forming an alcohol (often choline) and a cyclic phosphate. This toxin acts on sphingomyelin (SM). It may also act on ceramide phosphoethanolamine (CPE), lysophosphatidylcholine (LPC) and lysophosphatidylethanolamine (LPE), but not on lysophosphatidylserine (LPS), and lysophosphatidylglycerol (LPG). It acts by transphosphatidylation, releasing exclusively cyclic phosphate products as second products. Induces dermonecrosis, hemolysis, increased vascular permeability, edema, inflammatory response, and platelet aggregation. This chain is Dermonecrotic toxin LdSicTox-alphaIB3avi, found in Loxosceles deserta (Desert recluse spider).